Consider the following 523-residue polypeptide: MDSSKRHLLLILDGWGLADDPSVSAVEQADTPFVDHLYDEYPHGVLKASGLEVGLPDGQMGNSEVGHTNLGAGRVVYQEILRISKAIEDGSFFENDALVRAARHAKASDQKLHLMGCFSDGGVHSHLEHLYGLLELARREGLAPAQVNVHAFTDGRDTDPHGGVDYVEQFQKKADEIGVGRLASIVGRYYAMDRDERWARTERAYRLLTDGTGAAFDDPVTALKASYDDGVTDEFVEPRRIRADDADAFGDHGTRIEDGDAVVYYNFRSDRARQLTRAFTEADFDGFERERPDDLLFVTMSPYDDEFDLPVAFEKLNLEGTLGEVLSARGGRQLRAAETEKYAHVTYFFSGGREAPFDGEDRVLVPSPKVDTYDQQPEMSAPELADRVSRSLREADYTLAVLNFANPDMVGHTGDFEAAVAACEAVDRGARQVVEAARDQGYSVSIIADHGNADRLQNPDGSPHTAHTTALVPHIILKDGFEGPVRDGKLGDVAPTILTLLGEDVPDAMDGEVLVPAERAAAS.

Asp-13 and Ser-63 together coordinate Mn(2+). Ser-63 acts as the Phosphoserine intermediate in catalysis. Substrate-binding positions include His-124, 156-157 (RD), Arg-188, Arg-194, 268-271 (RSDR), and Lys-341. 5 residues coordinate Mn(2+): Asp-408, His-412, Asp-449, His-450, and His-467.

This sequence belongs to the BPG-independent phosphoglycerate mutase family. As to quaternary structure, monomer. Mn(2+) is required as a cofactor.

It catalyses the reaction (2R)-2-phosphoglycerate = (2R)-3-phosphoglycerate. The protein operates within carbohydrate degradation; glycolysis; pyruvate from D-glyceraldehyde 3-phosphate: step 3/5. Functionally, catalyzes the interconversion of 2-phosphoglycerate and 3-phosphoglycerate. This is 2,3-bisphosphoglycerate-independent phosphoglycerate mutase from Salinibacter ruber (strain DSM 13855 / M31).